The sequence spans 316 residues: N-acetyl-gamma-glutamyl-phosphate reductase (316 aa).

Residue cysteine 136 is part of the active site.

The protein belongs to the NAGSA dehydrogenase family. Type 1 subfamily.

The protein localises to the cytoplasm. The catalysed reaction is N-acetyl-L-glutamate 5-semialdehyde + phosphate + NADP(+) = N-acetyl-L-glutamyl 5-phosphate + NADPH + H(+). It participates in amino-acid biosynthesis; L-arginine biosynthesis; N(2)-acetyl-L-ornithine from L-glutamate: step 3/4. Its function is as follows. Catalyzes the NADPH-dependent reduction of N-acetyl-5-glutamyl phosphate to yield N-acetyl-L-glutamate 5-semialdehyde. The polypeptide is N-acetyl-gamma-glutamyl-phosphate reductase (Xanthomonas oryzae pv. oryzae (strain MAFF 311018)).